The following is a 459-amino-acid chain: Cysteine--tRNA ligase (459 aa).

Residue cysteine 31 coordinates Zn(2+). The 'HIGH' region motif lies at 33–43 (PTVYDNPHIGN). Cysteine 216, histidine 241, and glutamate 245 together coordinate Zn(2+). Positions 274–278 (KMSKS) match the 'KMSKS' region motif. ATP is bound at residue lysine 277.

It belongs to the class-I aminoacyl-tRNA synthetase family. In terms of assembly, monomer. Zn(2+) is required as a cofactor.

The protein resides in the cytoplasm. It carries out the reaction tRNA(Cys) + L-cysteine + ATP = L-cysteinyl-tRNA(Cys) + AMP + diphosphate. This chain is Cysteine--tRNA ligase, found in Rickettsia canadensis (strain McKiel).